The primary structure comprises 377 residues: Lipoyl synthase, mitochondrial (377 aa).

[4Fe-4S] cluster contacts are provided by Cys98, Cys103, Cys109, Cys128, Cys132, Cys135, and Ser343. The region spanning 113–332 (KKSEATATIM…RDTALDMGFL (220 aa)) is the Radical SAM core domain.

This sequence belongs to the radical SAM superfamily. Lipoyl synthase family. [4Fe-4S] cluster is required as a cofactor.

The protein resides in the mitochondrion. It carries out the reaction [[Fe-S] cluster scaffold protein carrying a second [4Fe-4S](2+) cluster] + N(6)-octanoyl-L-lysyl-[protein] + 2 oxidized [2Fe-2S]-[ferredoxin] + 2 S-adenosyl-L-methionine + 4 H(+) = [[Fe-S] cluster scaffold protein] + N(6)-[(R)-dihydrolipoyl]-L-lysyl-[protein] + 4 Fe(3+) + 2 hydrogen sulfide + 2 5'-deoxyadenosine + 2 L-methionine + 2 reduced [2Fe-2S]-[ferredoxin]. It participates in protein modification; protein lipoylation via endogenous pathway; protein N(6)-(lipoyl)lysine from octanoyl-[acyl-carrier-protein]: step 2/2. In terms of biological role, catalyzes the radical-mediated insertion of two sulfur atoms into the C-6 and C-8 positions of the octanoyl moiety bound to the lipoyl domains of lipoate-dependent enzymes, thereby converting the octanoylated domains into lipoylated derivatives. The chain is Lipoyl synthase, mitochondrial from Candida tropicalis (strain ATCC MYA-3404 / T1) (Yeast).